The chain runs to 207 residues: Outer-membrane lipoprotein LolB (207 aa).

An N-terminal signal peptide occupies residues 1–21 (MPLPDFRFIRLLPLAALVLTA). A lipid anchor (N-palmitoyl cysteine) is attached at Cys-22. A lipid anchor (S-diacylglycerol cysteine) is attached at Cys-22.

It belongs to the LolB family. Monomer.

The protein resides in the cell outer membrane. Plays a critical role in the incorporation of lipoproteins in the outer membrane after they are released by the LolA protein. This is Outer-membrane lipoprotein LolB from Escherichia coli O6:K15:H31 (strain 536 / UPEC).